Reading from the N-terminus, the 79-residue chain is Small ribosomal subunit protein bS20 (79 aa).

This sequence belongs to the bacterial ribosomal protein bS20 family.

Its function is as follows. Binds directly to 16S ribosomal RNA. This chain is Small ribosomal subunit protein bS20, found in Karelsulcia muelleri (strain GWSS) (Sulcia muelleri).